The chain runs to 113 residues: Putative pterin-4-alpha-carbinolamine dehydratase (113 aa).

This sequence belongs to the pterin-4-alpha-carbinolamine dehydratase family.

The catalysed reaction is (4aS,6R)-4a-hydroxy-L-erythro-5,6,7,8-tetrahydrobiopterin = (6R)-L-erythro-6,7-dihydrobiopterin + H2O. The sequence is that of Putative pterin-4-alpha-carbinolamine dehydratase from Chlorobium limicola (strain DSM 245 / NBRC 103803 / 6330).